Here is an 855-residue protein sequence, read N- to C-terminus: Coiled-coil domain-containing protein 87 (855 aa).

2 disordered regions span residues 23 to 43 (LFPS…QDAT) and 278 to 302 (SRPS…PTSP). Over residues 287–296 (PSHSPSSESH) the composition is skewed to low complexity. Coiled coils occupy residues 387-413 (TRRL…EASG) and 764-789 (RSYL…ESVF).

Belongs to the CCDC87 family. Specifically expressed in testis (at protein level). Not detected in other tissues tested (at protein level). In the testis, localizes to pachytene spermatocytes and spermatids.

Its function is as follows. Plays a role in spermatogenesis, where it is important for normal sperm head morphology. Also required for the acrosome reaction and thus normal male fertility. The polypeptide is Coiled-coil domain-containing protein 87 (Ccdc87) (Mus musculus (Mouse)).